The following is a 205-amino-acid chain: MPMVRIKICGITNTEDARAAAAAGADAVGLVFYRSSPRALDAVRARKILAALPPFVTRVGLFVNAEAADVAATLQQCPLDVLQFHGDESPSLCRGFGRPYIKVLRVTAAQDLRPAVDAYHDAQGLLLDCAAPGVWGGSGRSFDWWRLPDLGKPLILAGGLHAENVAEAIAIARPYAVDVSSGVELSPGRKDHDKMARFVARVRGT.

This sequence belongs to the TrpF family.

It carries out the reaction N-(5-phospho-beta-D-ribosyl)anthranilate = 1-(2-carboxyphenylamino)-1-deoxy-D-ribulose 5-phosphate. It participates in amino-acid biosynthesis; L-tryptophan biosynthesis; L-tryptophan from chorismate: step 3/5. The chain is N-(5'-phosphoribosyl)anthranilate isomerase from Acidithiobacillus ferrooxidans (strain ATCC 23270 / DSM 14882 / CIP 104768 / NCIMB 8455) (Ferrobacillus ferrooxidans (strain ATCC 23270)).